Reading from the N-terminus, the 1038-residue chain is Translation initiation factor IF-2 (1038 aa).

The disordered stretch occupies residues 32–442 (GSALASLSDE…RKGVNTAAPR (411 aa)). Low complexity-rich tracts occupy residues 65–77 (PPTK…PVAP), 100–113 (PAEA…PAQP), and 131–147 (PKLA…APAA). Basic and acidic residues-rich tracts occupy residues 204–217 (SGGR…KRES) and 275–295 (RSLD…DAGK). The span at 311 to 328 (PSAPAKPAAPTGSSGPAA) shows a compositional bias: low complexity. Positions 331–344 (PDIKLTRDVIEGHK) are enriched in basic and acidic residues. Over residues 422 to 435 (HHYRRSRPRIRRKG) the composition is skewed to basic residues. Positions 529–696 (ARPPVVTFLG…TLLTIAELNE (168 aa)) constitute a tr-type G domain. The G1 stretch occupies residues 538-545 (GHVDHGKT). 538–545 (GHVDHGKT) contributes to the GTP binding site. Residues 563–567 (GITQH) are G2. Positions 584 to 587 (DTPG) are G3. Residues 584–588 (DTPGH) and 638–641 (NKID) each bind GTP. Positions 638-641 (NKID) are G4. The interval 674-676 (SAT) is G5.

This sequence belongs to the TRAFAC class translation factor GTPase superfamily. Classic translation factor GTPase family. IF-2 subfamily.

The protein localises to the cytoplasm. Its function is as follows. One of the essential components for the initiation of protein synthesis. Protects formylmethionyl-tRNA from spontaneous hydrolysis and promotes its binding to the 30S ribosomal subunits. Also involved in the hydrolysis of GTP during the formation of the 70S ribosomal complex. This Rhodopirellula baltica (strain DSM 10527 / NCIMB 13988 / SH1) protein is Translation initiation factor IF-2.